The sequence spans 301 residues: Ornithine carbamoyltransferase (301 aa).

Carbamoyl phosphate-binding positions include 47 to 50 (STRT), Gln-74, Arg-98, and 125 to 128 (HPCQ). Residues Asn-156, Asp-220, and 224–225 (SM) contribute to the L-ornithine site. Carbamoyl phosphate contacts are provided by residues 260 to 261 (CL) and Arg-288.

It belongs to the aspartate/ornithine carbamoyltransferase superfamily. OTCase family.

Its subcellular location is the cytoplasm. The catalysed reaction is carbamoyl phosphate + L-ornithine = L-citrulline + phosphate + H(+). Its pathway is amino-acid biosynthesis; L-arginine biosynthesis; L-arginine from L-ornithine and carbamoyl phosphate: step 1/3. Functionally, reversibly catalyzes the transfer of the carbamoyl group from carbamoyl phosphate (CP) to the N(epsilon) atom of ornithine (ORN) to produce L-citrulline. This Methanobrevibacter smithii (strain ATCC 35061 / DSM 861 / OCM 144 / PS) protein is Ornithine carbamoyltransferase.